The chain runs to 304 residues: GTPase Era (304 aa).

The Era-type G domain occupies 11-179 (YCGFIAIVGR…QKIVRKSLRE (169 aa)). The interval 19–26 (GRPNVGKS) is G1. Residue 19–26 (GRPNVGKS) participates in GTP binding. The segment at 45–49 (QTTRH) is G2. A G3 region spans residues 66-69 (DTPG). GTP-binding positions include 66–70 (DTPGL) and 128–131 (NKVD). Positions 128–131 (NKVD) are G4. The interval 158 to 160 (ISA) is G5. The 78-residue stretch at 210–287 (TGEELPYSVT…HLELWVKVKA (78 aa)) folds into the KH type-2 domain.

Belongs to the TRAFAC class TrmE-Era-EngA-EngB-Septin-like GTPase superfamily. Era GTPase family. Monomer.

Its subcellular location is the cytoplasm. It is found in the cell inner membrane. Functionally, an essential GTPase that binds both GDP and GTP, with rapid nucleotide exchange. Plays a role in 16S rRNA processing and 30S ribosomal subunit biogenesis and possibly also in cell cycle regulation and energy metabolism. The protein is GTPase Era of Haemophilus ducreyi (strain 35000HP / ATCC 700724).